The sequence spans 237 residues: MDIRIIYSIQDAVGKTIKELGYKFEEINEDIIDFRYEKGDVIVVFSRHESSSKIPSLTVHYPGNPIDKTMGGEPKKLGIAFPSLLTSIYREIRKINIDIEKAIEATHHGPTYQHIPIIFVEIGSSKEYWENKELVKTLIEATLRGIDKYKDIECENKIVGFGGTHYTPYFSLLAEKSCVGHIISKYYLAELSNEVILQTVNNTIEKIDTVMFDNVNSKIREKIVNLLATYKLNFKFR.

It belongs to the DtdA deacylase family. As to quaternary structure, monomer. The cofactor is Zn(2+).

It carries out the reaction a D-aminoacyl-tRNA + H2O = a tRNA + a D-alpha-amino acid + H(+). It catalyses the reaction glycyl-tRNA(Ala) + H2O = tRNA(Ala) + glycine + H(+). Functionally, D-aminoacyl-tRNA deacylase with broad substrate specificity. By recycling D-aminoacyl-tRNA to D-amino acids and free tRNA molecules, this enzyme counteracts the toxicity associated with the formation of D-aminoacyl-tRNA entities in vivo. This chain is D-aminoacyl-tRNA deacylase, found in Sulfurisphaera tokodaii (strain DSM 16993 / JCM 10545 / NBRC 100140 / 7) (Sulfolobus tokodaii).